A 421-amino-acid polypeptide reads, in one-letter code: ATP-dependent RNA helicase RhlB (421 aa).

The Q motif motif lies at 9-37 (QKFSDFALHPAVIEALEKKGFHNCTPIQA). Residues 40–219 (LPLTLEGRDV…FEQMNNAEYV (180 aa)) enclose the Helicase ATP-binding domain. 53–60 (AQTGTGKT) serves as a coordination point for ATP. The DEAD box signature appears at 165–168 (DEAD). The region spanning 245–390 (RLLQTLLEEE…VSKYNPDALM (146 aa)) is the Helicase C-terminal domain. The disordered stretch occupies residues 396–421 (PLRLTRARPGNGPRRNGPPRNRRRSG). Over residues 403–414 (RPGNGPRRNGPP) the composition is skewed to low complexity.

Belongs to the DEAD box helicase family. RhlB subfamily. In terms of assembly, component of the RNA degradosome, which is a multiprotein complex involved in RNA processing and mRNA degradation.

It is found in the cytoplasm. It carries out the reaction ATP + H2O = ADP + phosphate + H(+). Its function is as follows. DEAD-box RNA helicase involved in RNA degradation. Has RNA-dependent ATPase activity and unwinds double-stranded RNA. This chain is ATP-dependent RNA helicase RhlB, found in Klebsiella pneumoniae subsp. pneumoniae (strain ATCC 700721 / MGH 78578).